A 166-amino-acid chain; its full sequence is MEMLKFGKFAALALAMAVAVGCSSKGGDNAGEGAAVDPNAGYGANTGAVDGSLSEEAALRAITTFYFEYDSSDLKPEAMRALDVHAKDLKANGNRVVLEGNTDERGTREYNMALGERRAKAVQRYLVLQGVSPAQLELVSYGEERPVATGNDEQSWAQNRRVELRK.

Residues 1–21 (MEMLKFGKFAALALAMAVAVG) form the signal peptide. The N-palmitoyl cysteine moiety is linked to residue Cys-22. Residue Cys-22 is the site of S-diacylglycerol cysteine attachment. The OmpA-like domain maps to 54 to 166 (SEEAALRAIT…AQNRRVELRK (113 aa)). Residues 147–166 (VATGNDEQSWAQNRRVELRK) form a disordered region.

The protein belongs to the Pal lipoprotein family. In terms of assembly, the Tol-Pal system is composed of five core proteins: the inner membrane proteins TolA, TolQ and TolR, the periplasmic protein TolB and the outer membrane protein Pal. They form a network linking the inner and outer membranes and the peptidoglycan layer.

Its subcellular location is the cell outer membrane. In terms of biological role, part of the Tol-Pal system, which plays a role in outer membrane invagination during cell division and is important for maintaining outer membrane integrity. The sequence is that of Peptidoglycan-associated lipoprotein from Pseudomonas putida (Arthrobacter siderocapsulatus).